An 81-amino-acid polypeptide reads, in one-letter code: Putative membrane protein insertion efficiency factor (81 aa).

A disordered region spans residues 60–81 (WNPGGYDPVPTHNTSNSSPMAE). The segment covering 70–81 (THNTSNSSPMAE) has biased composition (polar residues).

The protein belongs to the UPF0161 family.

Its subcellular location is the cell inner membrane. Functionally, could be involved in insertion of integral membrane proteins into the membrane. The polypeptide is Putative membrane protein insertion efficiency factor (Stutzerimonas stutzeri (strain A1501) (Pseudomonas stutzeri)).